Here is a 189-residue protein sequence, read N- to C-terminus: Recombination protein RecR (189 aa).

The C4-type zinc-finger motif lies at 48–63; sequence CQTCFHLSAEPTCEIC. The 95-residue stretch at 71–165 folds into the Toprim domain; that stretch reads GMLCVVADSR…EVSRIAYGLP (95 aa).

Belongs to the RecR family.

May play a role in DNA repair. It seems to be involved in an RecBC-independent recombinational process of DNA repair. It may act with RecF and RecO. This chain is Recombination protein RecR, found in Synechococcus sp. (strain CC9311).